The sequence spans 180 residues: Shikimate kinase (180 aa).

Residue 19–24 coordinates ATP; sequence GAGKTT. Mg(2+) is bound at residue Thr23. Substrate contacts are provided by Asp41, Arg65, and Gly87. An ATP-binding site is contributed by Arg125. Residue Arg144 coordinates substrate.

The protein belongs to the shikimate kinase family. Monomer. Requires Mg(2+) as cofactor.

It is found in the cytoplasm. It carries out the reaction shikimate + ATP = 3-phosphoshikimate + ADP + H(+). It functions in the pathway metabolic intermediate biosynthesis; chorismate biosynthesis; chorismate from D-erythrose 4-phosphate and phosphoenolpyruvate: step 5/7. Functionally, catalyzes the specific phosphorylation of the 3-hydroxyl group of shikimic acid using ATP as a cosubstrate. The chain is Shikimate kinase from Acinetobacter baylyi (strain ATCC 33305 / BD413 / ADP1).